Reading from the N-terminus, the 1074-residue chain is Collagen, type I, alpha 1a (1074 aa).

Positions 1–13 (KSPAMPVPGPMGP) are enriched in pro residues. Positions 1 to 1010 (KSPAMPVPGP…PQEKAPDPYR (1010 aa)) are disordered. Low complexity predominate over residues 14–36 (MGPRSGPQGFPGEAGAAGAMGPR). Positions 45 to 59 (NGEDGESGKPGRGGE) are enriched in basic and acidic residues. Positions 129–147 (TGAAGAAGARGNDGAAGAA) are enriched in low complexity. The span at 149-162 (PPGPTGPAGPPGFP) shows a compositional bias: pro residues. Gly residues predominate over residues 163–181 (GGPGAKGDAGAQGGRGPEG). 3 stretches are compositionally biased toward low complexity: residues 182-225 (PAGA…AGAP), 234-272 (SGPQ…APGV), and 290-299 (EPGAAGARGA). Residues 301–313 (GERGGPGGRGFPG) are compositionally biased toward gly residues. Low complexity-rich tracts occupy residues 377-392 (VGAR…PGPK), 469-530 (VPGE…QGMP), and 563-578 (RGLT…AGAT). Gly residues predominate over residues 588-597 (GPVGPGGARG). Low complexity-rich tracts occupy residues 611 to 647 (AGFA…AGPT) and 661 to 683 (PKGA…AGRV). The span at 685 to 697 (PPGPSGNPGPPGP) shows a compositional bias: pro residues. Composition is skewed to low complexity over residues 715 to 742 (PAGR…SEGA) and 803 to 823 (PGLA…SEGS). The segment covering 847–857 (APGPPGAPGPV) has biased composition (pro residues). Residues 871–890 (PAGPAGSAGPAGPRGPAGAP) are compositionally biased toward low complexity. Residues 893-907 (RGDKGESGEAGERGH) show a composition bias toward basic and acidic residues. A compositionally biased stretch (low complexity) spans 920 to 956 (SGSSGEQGPAGAAGPAGPRGPAGSAGSPGKDGMSGLP). The segment covering 974 to 986 (AGPPGPPGPPGAP) has biased composition (pro residues). The region spanning 1014 to 1074 (LEVDSTLKSL…GLEVGPVCFL (61 aa)) is the Fibrillar collagen NC1 domain.

The protein belongs to the fibrillar collagen family.

It localises to the secreted. The protein localises to the extracellular space. The protein resides in the extracellular matrix. The protein is Collagen, type I, alpha 1a of Epinephelus marginatus (Dusky grouper).